A 489-amino-acid chain; its full sequence is Dihydropyrimidinase 1 (489 aa).

Positions 61, 63, and 156 each coordinate Zn(2+). N6-carboxylysine is present on Lys156. Tyr161 is a binding site for substrate. Zn(2+) is bound by residues His189 and His245. Substrate is bound at residue Ser295. Asp323 is a binding site for Zn(2+). Asn344 provides a ligand contact to substrate.

This sequence belongs to the metallo-dependent hydrolases superfamily. Hydantoinase/dihydropyrimidinase family. Homotetramer. It depends on Zn(2+) as a cofactor. Carboxylation allows a single lysine to coordinate two zinc ions. In L1-L2 larvae, expressed in body hypodermal cells, hemidesmosomes and in a neuronal cell between the pharynx and ring neuropil. In adults, expression is seen in body hypodermal cells and pharynx.

Its subcellular location is the nucleus. The catalysed reaction is 5,6-dihydrouracil + H2O = 3-(carbamoylamino)propanoate + H(+). In Caenorhabditis elegans, this protein is Dihydropyrimidinase 1 (dhp-1).